The chain runs to 701 residues: Polyribonucleotide nucleotidyltransferase (701 aa).

The Mg(2+) site is built by Asp485 and Asp491. The KH domain maps to Pro552–Ile611. Residues Gly621–Lys689 enclose the S1 motif domain.

The protein belongs to the polyribonucleotide nucleotidyltransferase family. The cofactor is Mg(2+).

The protein resides in the cytoplasm. The catalysed reaction is RNA(n+1) + phosphate = RNA(n) + a ribonucleoside 5'-diphosphate. Its function is as follows. Involved in mRNA degradation. Catalyzes the phosphorolysis of single-stranded polyribonucleotides processively in the 3'- to 5'-direction. The sequence is that of Polyribonucleotide nucleotidyltransferase from Caldicellulosiruptor saccharolyticus (strain ATCC 43494 / DSM 8903 / Tp8T 6331).